Reading from the N-terminus, the 481-residue chain is Ribosomal RNA small subunit methyltransferase F (481 aa).

S-adenosyl-L-methionine contacts are provided by residues 119-125, Glu-143, Asp-170, and Asp-188; that span reads ASAPGSK. Cys-241 functions as the Nucleophile in the catalytic mechanism.

It belongs to the class I-like SAM-binding methyltransferase superfamily. RsmB/NOP family.

It is found in the cytoplasm. The enzyme catalyses cytidine(1407) in 16S rRNA + S-adenosyl-L-methionine = 5-methylcytidine(1407) in 16S rRNA + S-adenosyl-L-homocysteine + H(+). Specifically methylates the cytosine at position 1407 (m5C1407) of 16S rRNA. This chain is Ribosomal RNA small subunit methyltransferase F, found in Shewanella sp. (strain MR-4).